Here is a 158-residue protein sequence, read N- to C-terminus: UPF0145 protein Psyc_1853 (158 aa).

Residues 113-122 show a composition bias toward polar residues; sequence IYQSSNQPPS. Residues 113–158 form a disordered region; sequence IYQSSNQPPSHHSGHSQYEEPVPSAAQPSTTAQANDDLPRFNPFGE.

Belongs to the UPF0145 family.

The chain is UPF0145 protein Psyc_1853 from Psychrobacter arcticus (strain DSM 17307 / VKM B-2377 / 273-4).